Reading from the N-terminus, the 72-residue chain is uncharacterized protein (72 aa).

Its subcellular location is the cytoplasm. It localises to the nucleus. This is an uncharacterized protein from Saccharomyces cerevisiae (strain ATCC 204508 / S288c) (Baker's yeast).